Consider the following 92-residue polypeptide: Secreted RxLR effector protein 21 (92 aa).

The first 21 residues, 1–21 (MNLSTLLLTLACISQLHGGSA), serve as a signal peptide directing secretion. Residues 30 to 33 (RQLR) carry the RxLR motif.

The protein belongs to the RxLR effector family.

The protein localises to the secreted. Its subcellular location is the host nucleus. The protein resides in the host cytoplasm. Functionally, secreted effector that completely suppresses the host cell death induced by cell death-inducing proteins. The polypeptide is Secreted RxLR effector protein 21 (Plasmopara viticola (Downy mildew of grapevine)).